We begin with the raw amino-acid sequence, 712 residues long: Diacylglycerol kinase 2 (712 aa).

Phorbol-ester/DAG-type zinc fingers lie at residues His72–Cys133 and Arg145–Cys208. The DAGKc domain maps to Pro338–Ser479.

The protein belongs to the eukaryotic diacylglycerol kinase family. Monomer. In terms of tissue distribution, expressed in rosette and cauline leaves, flowers, siliques and roots. Highly expressed in young leaves and at lower levels in older leaves. In young seedlings, expressed at the root-shoot junction zone and vascular bundles of the cotyledons. In older plants, expressed in root tip, central cylinder, root hair, leaf mesophyll cells and guard cells, sepals, filaments of the anthers, stigma, valves of young and early adult siliques and hilum of seeds.

It is found in the endoplasmic reticulum. It catalyses the reaction a 1,2-diacyl-sn-glycerol + ATP = a 1,2-diacyl-sn-glycero-3-phosphate + ADP + H(+). The enzyme catalyses 1-octadecanoyl-2-(5Z,8Z,11Z,14Z-eicosatetraenoyl)-sn-glycerol + ATP = 1-octadecanoyl-2-(5Z,8Z,11Z,14Z-eicosatetraenoyl)-sn-glycero-3-phosphate + ADP + H(+). It carries out the reaction 1,2-di-(9Z-octadecenoyl)-sn-glycerol + ATP = 1,2-di-(9Z-octadecenoyl)-sn-glycero-3-phosphate + ADP + H(+). Phosphorylates the second messenger diacylglycerol (DAG) to generate phosphatidic acid (PA), another important signaling molecule. PA is required for plant development and responses to abiotic stress and pathogen attack. May be involved in the accumulation of PA during cold stress. Involved in response to freezing stress by modulating the accumulation of PA. Exhibits high specificity for the unsaturated DAG analogs 1-stearoyl-2-arachidonoyl-sn-glycerol (1,2-SAG) and 1,2-dioleoyl-sn-glycerol (1,2-DOG). Exhibits high specificity for 1-palmitoyl, 2-oleoyl-sn-glycerol (1,2 POG), 1-stearoyl, 2-linoleoyl-sn-glycerol (1,2-SLG) and 1-oleoyl, 2-palmitoyl-sn-glycerol (1,2-OPG). Has almost no activity toward 1,2-dioctanoyl-sn-glycerol (1,2-DOCG), 1,2-dipalmitoyl-sn-glycerol (1,2-DPG), 1,2-dimyristoyl-sn-glycerol (1,2-DMG) and 1-oleoyl-2-acetyl-sn-glycerol (1,2-OAG). Functions together with DGK4 in male gametophyte development and biosynthesis of phosphatidylglycerol and phosphatidylinositol in the endoplasmic reticulum (ER). Involved in PA production for pollen grain growth, as well as leaf and root growth. This chain is Diacylglycerol kinase 2, found in Arabidopsis thaliana (Mouse-ear cress).